The following is a 281-amino-acid chain: Cell growth regulator with EF hand domain protein 1 (281 aa).

The signal sequence occupies residues 1 to 21 (MFQWLMQALMLPLLLLPLGRA). EF-hand domains follow at residues 71–106 (DREQ…ALAP) and 115–150 (PVIL…PKHT). Residues Asp84, Asp86, Asn88, Gln90, Glu95, Asp128, Asp130, Asp132, and Glu139 each contribute to the Ca(2+) site. The interval 148-281 (KHTESLPPAL…HSIQLENDEI (134 aa)) is disordered. A compositionally biased stretch (polar residues) spans 168 to 183 (LLANSPLQSETQQSLG). Positions 184–213 (TKEEIRGQVEAKRASLEPEQEAGHQTEGKV) are enriched in basic and acidic residues. Ser217 and Ser228 each carry phosphoserine. Positions 237–256 (EGAEEQVEIKDNEGEAKELL) are enriched in basic and acidic residues.

Probably digested extracellularly by an unknown serine protease generating extremely hydrophobic bioactive peptides.

Its subcellular location is the secreted. Mediates cell-cell adhesion in a calcium-dependent manner. Able to inhibit growth in several cell lines. This is Cell growth regulator with EF hand domain protein 1 from Mus musculus (Mouse).